Reading from the N-terminus, the 426-residue chain is Serine--tRNA ligase (426 aa).

An L-serine-binding site is contributed by 230 to 232 (TSE). 261 to 263 (RKE) serves as a coordination point for ATP. Position 284 (Glu-284) interacts with L-serine. An ATP-binding site is contributed by 348-351 (EISS). Ser-385 provides a ligand contact to L-serine.

The protein belongs to the class-II aminoacyl-tRNA synthetase family. Type-1 seryl-tRNA synthetase subfamily. In terms of assembly, homodimer. The tRNA molecule binds across the dimer.

It is found in the cytoplasm. The catalysed reaction is tRNA(Ser) + L-serine + ATP = L-seryl-tRNA(Ser) + AMP + diphosphate + H(+). The enzyme catalyses tRNA(Sec) + L-serine + ATP = L-seryl-tRNA(Sec) + AMP + diphosphate + H(+). Its pathway is aminoacyl-tRNA biosynthesis; selenocysteinyl-tRNA(Sec) biosynthesis; L-seryl-tRNA(Sec) from L-serine and tRNA(Sec): step 1/1. Its function is as follows. Catalyzes the attachment of serine to tRNA(Ser). Is also able to aminoacylate tRNA(Sec) with serine, to form the misacylated tRNA L-seryl-tRNA(Sec), which will be further converted into selenocysteinyl-tRNA(Sec). The protein is Serine--tRNA ligase of Wolbachia pipientis subsp. Culex pipiens (strain wPip).